The chain runs to 549 residues: Fumarate hydratase 1, mitochondrial (549 aa).

[4Fe-4S] cluster is bound at residue cysteine 114. (S)-malate contacts are provided by residues 115 to 116, arginine 154, glycine 197, and 200 to 206; these read QD and NKSFLLQ. [4Fe-4S] cluster contacts are provided by cysteine 233 and cysteine 328. (S)-malate-binding positions include arginine 404, 450–454, and lysine 474; that span reads TTAGR.

The protein belongs to the class-I fumarase family. In terms of assembly, homodimer. [4Fe-4S] cluster is required as a cofactor.

Its subcellular location is the mitochondrion. It carries out the reaction (S)-malate = fumarate + H2O. It functions in the pathway carbohydrate metabolism; tricarboxylic acid cycle; (S)-malate from fumarate: step 1/1. Its activity is regulated as follows. Specifically and competitively inhibited by 2-thiomalate, which coordinates with the catalytic [4Fe-4S] cluster. In terms of biological role, catalyzes the reversible hydration of fumarate to (S)-malate. Catalyzes the hydration of fumarate to L-malate in the tricarboxylic acid (TCA) cycle to facilitate a transition step in the production of energy in the form of NADH. This is Fumarate hydratase 1, mitochondrial from Leishmania major.